A 254-amino-acid chain; its full sequence is 5-oxoprolinase subunit A (254 aa).

It belongs to the LamB/PxpA family. As to quaternary structure, forms a complex composed of PxpA, PxpB and PxpC.

The catalysed reaction is 5-oxo-L-proline + ATP + 2 H2O = L-glutamate + ADP + phosphate + H(+). In terms of biological role, catalyzes the cleavage of 5-oxoproline to form L-glutamate coupled to the hydrolysis of ATP to ADP and inorganic phosphate. The chain is 5-oxoprolinase subunit A from Burkholderia ambifaria (strain MC40-6).